A 692-amino-acid chain; its full sequence is Elongation factor G (692 aa).

One can recognise a tr-type G domain in the interval 8–282; sequence ENTRNIGIMA…AVLDYLPSPL (275 aa). Residues 17 to 24, 81 to 85, and 135 to 138 contribute to the GTP site; these read AHIDAGKT, DTPGH, and NKMD.

The protein belongs to the TRAFAC class translation factor GTPase superfamily. Classic translation factor GTPase family. EF-G/EF-2 subfamily.

The protein localises to the cytoplasm. Functionally, catalyzes the GTP-dependent ribosomal translocation step during translation elongation. During this step, the ribosome changes from the pre-translocational (PRE) to the post-translocational (POST) state as the newly formed A-site-bound peptidyl-tRNA and P-site-bound deacylated tRNA move to the P and E sites, respectively. Catalyzes the coordinated movement of the two tRNA molecules, the mRNA and conformational changes in the ribosome. This Halalkalibacterium halodurans (strain ATCC BAA-125 / DSM 18197 / FERM 7344 / JCM 9153 / C-125) (Bacillus halodurans) protein is Elongation factor G (fusA).